Here is a 40-residue protein sequence, read N- to C-terminus: Large ribosomal subunit protein bL36 (40 aa).

This sequence belongs to the bacterial ribosomal protein bL36 family.

The polypeptide is Large ribosomal subunit protein bL36 (Coxiella burnetii (strain Dugway 5J108-111)).